Here is a 235-residue protein sequence, read N- to C-terminus: Large ribosomal subunit protein uL1 (235 aa).

Belongs to the universal ribosomal protein uL1 family. In terms of assembly, part of the 50S ribosomal subunit.

Binds directly to 23S rRNA. The L1 stalk is quite mobile in the ribosome, and is involved in E site tRNA release. Functionally, protein L1 is also a translational repressor protein, it controls the translation of the L11 operon by binding to its mRNA. This Corynebacterium diphtheriae (strain ATCC 700971 / NCTC 13129 / Biotype gravis) protein is Large ribosomal subunit protein uL1.